The following is a 421-amino-acid chain: Subtilisin-like protease 2 (421 aa).

The signal sequence occupies residues 1 to 16 (MQLLNFGLLLLPFVAG). Residues 17–122 (DLAPQPEPLL…VHPDQHFYLA (106 aa)) constitute a propeptide that is removed on maturation. One can recognise an Inhibitor I9 domain in the interval 36–121 (QYLVTLKEGL…SVHPDQHFYL (86 aa)). In terms of domain architecture, Peptidase S8 spans 131–421 (RWGLGYMSSK…ERKCKLPKYY (291 aa)). D169 functions as the Charge relay system in the catalytic mechanism. The N-linked (GlcNAc...) asparagine glycan is linked to N192. Catalysis depends on H201, which acts as the Charge relay system. N-linked (GlcNAc...) asparagine glycosylation is found at N248, N261, and N348. The active-site Charge relay system is S357. N388 is a glycosylation site (N-linked (GlcNAc...) asparagine).

Belongs to the peptidase S8 family.

Its subcellular location is the secreted. In terms of biological role, secreted subtilisin-like serine protease with keratinolytic activity that contributes to pathogenicity. In Trichophyton rubrum (Athlete's foot fungus), this protein is Subtilisin-like protease 2 (SUB2).